The following is an 87-amino-acid chain: Small ribosomal subunit protein bS20 (87 aa).

Residues 1–26 are disordered; it reads MANIKSAKKRAVQSEKARKHNASRRS.

It belongs to the bacterial ribosomal protein bS20 family.

Functionally, binds directly to 16S ribosomal RNA. This chain is Small ribosomal subunit protein bS20, found in Salmonella typhi.